The primary structure comprises 146 residues: Ferredoxin-thioredoxin reductase catalytic chain, chloroplastic (146 aa).

A chloroplast-targeting transit peptide spans 1 to 31; sequence MNLQAVSCSFGFLSSPLGVTPRTSFRRFVIR. A [4Fe-4S] cluster-binding site is contributed by C85. The Nucleophile role is filled by C87. Cysteines 87 and 117 form a disulfide. Residues C104, C106, and C115 each contribute to the [4Fe-4S] cluster site.

Belongs to the ferredoxin thioredoxin reductase beta subunit family. Heterodimer of subunit A (variable subunit) and subunit B (catalytic subunit). Heterodimeric FTR forms a complex with ferredoxin and thioredoxin. The cofactor is [4Fe-4S] cluster.

The protein localises to the plastid. The protein resides in the chloroplast. The enzyme catalyses [thioredoxin]-disulfide + 2 reduced [2Fe-2S]-[ferredoxin] + 2 H(+) = [thioredoxin]-dithiol + 2 oxidized [2Fe-2S]-[ferredoxin]. Functionally, catalytic subunit of the ferredoxin-thioredoxin reductase (FTR), which catalyzes the two-electron reduction of thioredoxins by the electrons provided by reduced ferredoxin. The polypeptide is Ferredoxin-thioredoxin reductase catalytic chain, chloroplastic (Arabidopsis thaliana (Mouse-ear cress)).